The sequence spans 342 residues: Heat-inducible transcription repressor HrcA (342 aa).

Belongs to the HrcA family.

Its function is as follows. Negative regulator of class I heat shock genes (grpE-dnaK-dnaJ and groELS operons). Prevents heat-shock induction of these operons. This chain is Heat-inducible transcription repressor HrcA, found in Corynebacterium efficiens (strain DSM 44549 / YS-314 / AJ 12310 / JCM 11189 / NBRC 100395).